The sequence spans 57 residues: uncharacterized protein (57 aa).

This is an uncharacterized protein from Homo sapiens (Human).